Consider the following 75-residue polypeptide: 8.9 kDa basic protein (75 aa).

This chain is 8.9 kDa basic protein (P8.9), found in Orgyia pseudotsugata (Douglas-fir tussock moth).